We begin with the raw amino-acid sequence, 130 residues long: Small ribosomal subunit protein uS11 (130 aa).

This sequence belongs to the universal ribosomal protein uS11 family. As to quaternary structure, part of the 30S ribosomal subunit. Interacts with proteins S7 and S18. Binds to IF-3.

In terms of biological role, located on the platform of the 30S subunit, it bridges several disparate RNA helices of the 16S rRNA. Forms part of the Shine-Dalgarno cleft in the 70S ribosome. The polypeptide is Small ribosomal subunit protein uS11 (Gloeobacter violaceus (strain ATCC 29082 / PCC 7421)).